The chain runs to 284 residues: Nucleotide-binding protein TTE1834 (284 aa).

Residue 8–15 (GLSGAGKT) participates in ATP binding. 58–61 (DLRG) is a GTP binding site.

It belongs to the RapZ-like family.

Its function is as follows. Displays ATPase and GTPase activities. In Caldanaerobacter subterraneus subsp. tengcongensis (strain DSM 15242 / JCM 11007 / NBRC 100824 / MB4) (Thermoanaerobacter tengcongensis), this protein is Nucleotide-binding protein TTE1834.